The primary structure comprises 212 residues: Riboflavin synthase (212 aa).

Lumazine-binding repeat units follow at residues 1–97 (MFTG…VGGH) and 98–195 (LVSG…VDSV). Residues 4–6 (GIV), 48–50 (CLT), 62–67 (DIVEET), 101–103 (GHI), K137, 146–148 (SLT), and 160–165 (FLIPET) each bind 2,4-dihydroxypteridine.

As to quaternary structure, homotrimer.

It carries out the reaction 2 6,7-dimethyl-8-(1-D-ribityl)lumazine + H(+) = 5-amino-6-(D-ribitylamino)uracil + riboflavin. The protein operates within cofactor biosynthesis; riboflavin biosynthesis; riboflavin from 2-hydroxy-3-oxobutyl phosphate and 5-amino-6-(D-ribitylamino)uracil: step 2/2. Catalyzes the dismutation of two molecules of 6,7-dimethyl-8-ribityllumazine, resulting in the formation of riboflavin and 5-amino-6-(D-ribitylamino)uracil. This chain is Riboflavin synthase (ribE), found in Buchnera aphidicola subsp. Baizongia pistaciae (strain Bp).